A 65-amino-acid polypeptide reads, in one-letter code: Large ribosomal subunit protein bL35 (65 aa).

The tract at residues 1–28 (MPKMKTNRSAAKRFGKTGSGKFTRRRQN) is disordered.

The protein belongs to the bacterial ribosomal protein bL35 family.

The sequence is that of Large ribosomal subunit protein bL35 from Solidesulfovibrio magneticus (strain ATCC 700980 / DSM 13731 / RS-1) (Desulfovibrio magneticus).